Consider the following 900-residue polypeptide: Bifunctional uridylyltransferase/uridylyl-removing enzyme (900 aa).

The uridylyltransferase stretch occupies residues 1 to 342; sequence MPQVDPELFD…WEGESGPIVP (342 aa). Residues 343-705 are uridylyl-removing; that stretch reads LNSRFQVRDG…TTQREFEGGT (363 aa). In terms of domain architecture, HD spans 461–583; it reads VDAHTLNVIK…VGDETHLDYL (123 aa). 2 consecutive ACT domains span residues 706 to 789 and 816 to 896; these read QIFI…IIQR and ILEI…PSPS.

Belongs to the GlnD family. Requires Mg(2+) as cofactor.

It catalyses the reaction [protein-PII]-L-tyrosine + UTP = [protein-PII]-uridylyl-L-tyrosine + diphosphate. The catalysed reaction is [protein-PII]-uridylyl-L-tyrosine + H2O = [protein-PII]-L-tyrosine + UMP + H(+). Its activity is regulated as follows. Uridylyltransferase (UTase) activity is inhibited by glutamine, while glutamine activates uridylyl-removing (UR) activity. Its function is as follows. Modifies, by uridylylation and deuridylylation, the PII regulatory proteins (GlnB and homologs), in response to the nitrogen status of the cell that GlnD senses through the glutamine level. Under low glutamine levels, catalyzes the conversion of the PII proteins and UTP to PII-UMP and PPi, while under higher glutamine levels, GlnD hydrolyzes PII-UMP to PII and UMP (deuridylylation). Thus, controls uridylylation state and activity of the PII proteins, and plays an important role in the regulation of nitrogen fixation and metabolism. The sequence is that of Bifunctional uridylyltransferase/uridylyl-removing enzyme from Stutzerimonas stutzeri (strain A1501) (Pseudomonas stutzeri).